A 535-amino-acid chain; its full sequence is Sodium/hydrogen exchanger 1 (535 aa).

Residues 1–21 lie on the Cytoplasmic side of the membrane; that stretch reads MGMEVAAARLGALYTTSDYAS. The helical transmembrane segment at 22-42 threads the bilayer; it reads VVSINLFVALLCACIVLGHLL. Residues 43 to 46 lie on the Vacuolar side of the membrane; it reads EENR. Residues 47–67 traverse the membrane as a helical segment; sequence WVNESITALIIGLCTGVVILL. At 68–75 the chain is on the cytoplasmic side; the sequence is MTKGKSSH. The helical transmembrane segment at 76 to 96 threads the bilayer; sequence LFVFSEDLFFIYLLPPIIFNA. Over 97–114 the chain is Vacuolar; sequence GFQVKKKQFFRNFMTITL. The helical transmembrane segment at 115–135 threads the bilayer; that stretch reads FGAVGTMISFFTISIAAIAIF. Topologically, residues 136 to 137 are cytoplasmic; that stretch reads SR. The chain crosses the membrane as a helical span at residues 138-158; sequence MNIGTLDVGDFLAIGAIFSAT. Topologically, residues 159 to 173 are vacuolar; the sequence is DSVCTLQVLNQDETP. Residues 174–194 form a helical membrane-spanning segment; sequence FLYSLVFGEGVVNDATSIVLF. Residues 195 to 218 are Cytoplasmic-facing; sequence NALQNFDLVHIDAAVVLKFLGNFF. The chain crosses the membrane as a helical span at residues 219-239; that stretch reads YLFLSSTFLGVFAGLLSAYII. Over 240–264 the chain is Vacuolar; that stretch reads KKLYIGRHSTDREVALMMLMAYLSY. Residues 265–285 form a helical membrane-spanning segment; the sequence is MLAELLDLSGILTVFFCGIVM. The Cytoplasmic segment spans residues 286–304; sequence SHYTWHNVTESSRVTTKHA. A helical transmembrane segment spans residues 305-325; it reads FATLSFIAETFLFLYVGMDAL. Over 326–344 the chain is Vacuolar; that stretch reads DIEKWEFASDRPGKSIGIS. A helical transmembrane segment spans residues 345–365; the sequence is SILLGLVLIGRAAFVFPLSFL. The Cytoplasmic portion of the chain corresponds to 366–381; the sequence is SNLTKKAPNEKITWRQ. A helical membrane pass occupies residues 382–402; sequence QVVIWWAGLMRGAVSIALAYN. The Vacuolar portion of the chain corresponds to 403–415; that stretch reads KFTRSGHTQLHGN. Residues 416 to 436 form a helical membrane-spanning segment; sequence AIMITSTITVVLFSTMVFGMM. Over 437-535 the chain is Cytoplasmic; sequence TKPLIRLLLP…SPTEQSHGGR (99 aa). A disordered region spans residues 452-478; sequence VTSEPSSPKSLHSPLLTSMQGSDLEST. Residues 454–469 are compositionally biased toward low complexity; it reads SEPSSPKSLHSPLLTS.

Belongs to the monovalent cation:proton antiporter 1 (CPA1) transporter (TC 2.A.36) family.

The protein localises to the vacuole membrane. The enzyme catalyses Na(+)(in) + H(+)(out) = Na(+)(out) + H(+)(in). The catalysed reaction is K(+)(in) + H(+)(out) = K(+)(out) + H(+)(in). In terms of biological role, vacuolar antiporter that acts in low affinity electroneutral exchange of protons H(+) for cations such as Na(+) or K(+) across membranes. Plays important roles in the transport of Na(+) and K(+) accumulated in the cytoplasm into vacuoles, and is involved in salt stress tolerance. The chain is Sodium/hydrogen exchanger 1 from Oryza sativa subsp. japonica (Rice).